Reading from the N-terminus, the 261-residue chain is MICOS complex subunit Mic25 (261 aa).

Gly2 is lipidated: N-myristoyl glycine. Residues Ser13, Ser31, and Ser33 each carry the phosphoserine modification. 3 disordered regions span residues 39 to 59 (KDCS…PECS), 81 to 114 (CGPA…VKED), and 140 to 165 (TEKH…RLTR). Residues 109 to 202 (SAVKEDLKKF…AELYKLSSQQ (94 aa)) are a coiled coil. Positions 154–165 (THEQQQSDRLTR) are enriched in basic and acidic residues. Positions 220–261 (EPVCSGLQAQILRCYRDHLHEVLLCSDLAKAYQHCVSTARKG) constitute a CHCH domain. Short sequence motifs (cx9C motif) lie at residues 223-233 (CSGLQAQILRC) and 244-254 (CSDLAKAYQHC). Intrachain disulfides connect Cys223-Cys254 and Cys233-Cys244.

It belongs to the MICOS complex subunit Mic19 family. Metazoan Mic25 subfamily. Component of the mitochondrial contact site and cristae organizing system (MICOS) complex, composed of at least MICOS10/MIC10, CHCHD3/MIC19, CHCHD6/MIC25, APOOL/MIC27, IMMT/MIC60, APOO/MIC23/MIC26 and MICOS13/MIC13. This complex was also known under the names MINOS or MitOS complex. The MICOS complex associates with mitochondrial outer membrane proteins SAMM50, MTX1 and MTX2 (together described as components of the mitochondrial outer membrane sorting assembly machinery (SAM) complex) and DNAJC11, mitochondrial inner membrane protein TMEM11 and with HSPA9. The MICOS and SAM complexes together with DNAJC11 are part of a large protein complex spanning both membranes termed the mitochondrial intermembrane space bridging (MIB) complex. Interacts with DISC1. Interacts with IMMT/MIC60.

It localises to the mitochondrion inner membrane. Its subcellular location is the mitochondrion. Functionally, component of the MICOS complex, a large protein complex of the mitochondrial inner membrane that plays crucial roles in the maintenance of crista junctions, inner membrane architecture, and formation of contact sites to the outer membrane. The polypeptide is MICOS complex subunit Mic25 (Chchd6) (Rattus norvegicus (Rat)).